We begin with the raw amino-acid sequence, 148 residues long: Wheatwin-2 (148 aa).

A signal peptide spans 1-23 (MTMAARLMLVAALLCAAAAAATA). Residue glutamine 24 is modified to Pyrrolidone carboxylic acid. A Barwin domain is found at 24 to 148 (QQATNVRATY…VNYQFVDCRD (125 aa)). Disulfide bonds link cysteine 54–cysteine 86, cysteine 75–cysteine 109, and cysteine 89–cysteine 146.

In terms of assembly, monomer.

Its function is as follows. Shows antifungal activity towards B.cinerea and towards the wheat-specific pathogenic fungi F.culmorum and F.graminearum (groups 1 and 2). In Triticum aestivum (Wheat), this protein is Wheatwin-2 (PR4B).